Consider the following 197-residue polypeptide: Large ribosomal subunit protein uL11 (197 aa).

This sequence belongs to the universal ribosomal protein uL11 family. In terms of assembly, part of the ribosomal stalk of the 50S ribosomal subunit. Interacts with L10 and the large rRNA to form the base of the stalk. L10 forms an elongated spine to which L12 dimers bind in a sequential fashion forming a multimeric L10(L12)X complex. Post-translationally, one or more lysine residues are methylated.

Forms part of the ribosomal stalk which helps the ribosome interact with GTP-bound translation factors. The protein is Large ribosomal subunit protein uL11 of Mycoplasmopsis pulmonis (strain UAB CTIP) (Mycoplasma pulmonis).